A 363-amino-acid chain; its full sequence is Peptide chain release factor 1 (363 aa).

N5-methylglutamine is present on glutamine 237. The interval 281-302 (QQAEDEKSHAEEQTIRRSLVAS) is disordered. Positions 282 to 295 (QAEDEKSHAEEQTI) are enriched in basic and acidic residues.

It belongs to the prokaryotic/mitochondrial release factor family. Post-translationally, methylated by PrmC. Methylation increases the termination efficiency of RF1.

The protein resides in the cytoplasm. Peptide chain release factor 1 directs the termination of translation in response to the peptide chain termination codons UAG and UAA. The chain is Peptide chain release factor 1 from Psychromonas ingrahamii (strain DSM 17664 / CCUG 51855 / 37).